A 626-amino-acid chain; its full sequence is Nuclear RNA export factor 2 (626 aa).

Phosphoserine is present on serine 34. Positions tryptophan 124–tyrosine 203 constitute an RRM domain. 4 LRR repeats span residues glutamate 271–proline 296, lysine 297–leucine 320, lysine 321–aspartate 348, and cysteine 349–lysine 376. The 151-residue stretch at leucine 391–valine 541 folds into the NTF2 domain. Residues glutamine 570–isoleucine 625 enclose the TAP-C domain.

This sequence belongs to the NXF family. As to quaternary structure, interacts with NXT1, NXT2, E1B-AP5, the REF proteins and with nucleoporins, Nup62, Nup153 and Nup214. Interacts with LUZP4. In terms of tissue distribution, expressed almost exclusively in testis. Also expressed in several cancers.

Its subcellular location is the nucleus. It is found in the nucleoplasm. The protein localises to the cytoplasm. Functionally, involved in the export of mRNA from the nucleus to the cytoplasm. This Homo sapiens (Human) protein is Nuclear RNA export factor 2 (NXF2).